Reading from the N-terminus, the 345-residue chain is Methionine import ATP-binding protein MetN (345 aa).

The ABC transporter domain occupies 2 to 241 (IKLNNIXKIF…PKTELAQEFI (240 aa)). 38–45 (GASGAGKS) lines the ATP pocket.

This sequence belongs to the ABC transporter superfamily. Methionine importer (TC 3.A.1.24) family. The complex is composed of two ATP-binding proteins (MetN), two transmembrane proteins (MetI) and a solute-binding protein (MetQ).

The protein resides in the cell inner membrane. The enzyme catalyses L-methionine(out) + ATP + H2O = L-methionine(in) + ADP + phosphate + H(+). The catalysed reaction is D-methionine(out) + ATP + H2O = D-methionine(in) + ADP + phosphate + H(+). In terms of biological role, part of the ABC transporter complex MetNIQ involved in methionine import. Responsible for energy coupling to the transport system. The sequence is that of Methionine import ATP-binding protein MetN from Haemophilus influenzae (strain ATCC 51907 / DSM 11121 / KW20 / Rd).